The following is a 308-amino-acid chain: MKIIPLASESLGVRSLALFLRIGKVGILIDPGVALGPKRYSLPPAQAEMKALAVAREKIQEYAKKAQIVTISHYHYDHHTPFFEGLYESSSIEKAKEIYTGKILLIKHPQENINHSQRKRAQEFLKNAREIAREISSADSKTFDFGEFIIEFSPPVPHGREGSKLGYVVMTLVDDGKTRIVHASDSQLINDRAIDWIIEKNPDILIAGGPPTYLSYRVGNVREVGIKNINRIIAETNAKLVIDHHVVRDKNYENFFQELDKTPQTFAEFLGVKSAPLEAYRKELHKLEKGEDVELPKGIQKFLKGLPP.

Belongs to the UPF0282 family.

This is UPF0282 protein PYRAB09800 from Pyrococcus abyssi (strain GE5 / Orsay).